A 146-amino-acid chain; its full sequence is Large ribosomal subunit protein uL15 (146 aa).

The disordered stretch occupies residues 1–65 (MSDIQLNSLK…GQMPLQRRLP (65 aa)). The segment covering 24 to 34 (RGIGSGLGKTA) has biased composition (gly residues).

It belongs to the universal ribosomal protein uL15 family. As to quaternary structure, part of the 50S ribosomal subunit.

Its function is as follows. Binds to the 23S rRNA. This Bordetella avium (strain 197N) protein is Large ribosomal subunit protein uL15.